Consider the following 172-residue polypeptide: Ubiquitin-conjugating enzyme E2 PEX4 (172 aa).

Residues 14–167 (SASKRLIKEL…VELWCQDSDS (154 aa)) form the UBC core domain. The active-site Glycyl thioester intermediate is Cys104.

The protein belongs to the ubiquitin-conjugating enzyme family.

The enzyme catalyses S-ubiquitinyl-[E1 ubiquitin-activating enzyme]-L-cysteine + [E2 ubiquitin-conjugating enzyme]-L-cysteine = [E1 ubiquitin-activating enzyme]-L-cysteine + S-ubiquitinyl-[E2 ubiquitin-conjugating enzyme]-L-cysteine.. Its pathway is protein modification; protein ubiquitination. Its function is as follows. Ubiquitin-conjugating enzyme E2 that is essential for peroxisome biogenesis and plays a key role in development, pathogenicity, and cell wall integrity. Required for long and very long-chain fatty acid utilization and is involved in lipid droplet accumulation and the elimination of reactive oxygen species. Controls the expression of proteins involved in protein biosynthesis, fatty acid metabolism, cell wall synthesis, oxidation-reduction reactions, as well as of the enzymes involved in the biosynthesis of the mycotoxin deoxynivalenol (DON), including TRI5, TRI6, and TRI10. This Gibberella zeae (strain ATCC MYA-4620 / CBS 123657 / FGSC 9075 / NRRL 31084 / PH-1) (Wheat head blight fungus) protein is Ubiquitin-conjugating enzyme E2 PEX4.